The sequence spans 434 residues: Exopolygalacturonase X-1 (434 aa).

Residues 1–22 (MKLSHLLTSAVSVLSLGLTVEG) form the signal peptide. N113, N129, and N199 each carry an N-linked (GlcNAc...) asparagine glycan. A PbH1 1 repeat occupies 231–252 (SKNIVIQNSVINNGDDCVSFKP). Residue D245 is the Proton donor of the active site. A disulfide bond links C247 and C264. N-linked (GlcNAc...) asparagine glycans are attached at residues N253 and N265. A PbH1 2 repeat occupies 254 to 274 (STEILVQNLYCNGSHGISVGS). H268 is an active-site residue. Residues N292, N297, N329, N354, and N364 are each glycosylated (N-linked (GlcNAc...) asparagine). Residues 327–348 (VSNITYEDMYIENVDWAIEITQ) form a PbH1 3 repeat. One copy of the PbH1 4 repeat lies at 362-405 (PSNLTISDVYISNMYGTTSSARDPNIGTIVCSSPDVCSNIYVEN). An intrachain disulfide couples C392 to C398. N423 and N430 each carry an N-linked (GlcNAc...) asparagine glycan.

The protein belongs to the glycosyl hydrolase 28 family.

The protein localises to the secreted. The enzyme catalyses [(1-&gt;4)-alpha-D-galacturonosyl](n) + H2O = alpha-D-galacturonate + [(1-&gt;4)-alpha-D-galacturonosyl](n-1). Functionally, specific in hydrolyzing the terminal glycosidic bond of polygalacturonic acid and oligogalacturonates. This is Exopolygalacturonase X-1 (pgaX-1) from Emericella nidulans (strain FGSC A4 / ATCC 38163 / CBS 112.46 / NRRL 194 / M139) (Aspergillus nidulans).